The chain runs to 252 residues: Ribosomal RNA small subunit methyltransferase J (252 aa).

S-adenosyl-L-methionine-binding positions include 126–127 (ER) and aspartate 176.

Belongs to the methyltransferase superfamily. RsmJ family.

Its subcellular location is the cytoplasm. It carries out the reaction guanosine(1516) in 16S rRNA + S-adenosyl-L-methionine = N(2)-methylguanosine(1516) in 16S rRNA + S-adenosyl-L-homocysteine + H(+). Specifically methylates the guanosine in position 1516 of 16S rRNA. In Bdellovibrio bacteriovorus (strain ATCC 15356 / DSM 50701 / NCIMB 9529 / HD100), this protein is Ribosomal RNA small subunit methyltransferase J.